Reading from the N-terminus, the 65-residue chain is MARRDDLTNKGPMSGNKRSHALNATKRKFNLNLQKILVTLENGSKVKIKVSAKTAKTLKKQGFVA.

The interval 1–26 (MARRDDLTNKGPMSGNKRSHALNATK) is disordered. Over residues 17 to 26 (KRSHALNATK) the composition is skewed to basic residues.

Belongs to the bacterial ribosomal protein bL28 family.

The protein is Large ribosomal subunit protein bL28 of Mycoplasma mobile (strain ATCC 43663 / 163K / NCTC 11711) (Mesomycoplasma mobile).